The primary structure comprises 224 residues: Phosphoribosylformylglycinamidine synthase subunit PurQ (224 aa).

A Glutamine amidotransferase type-1 domain is found at 2–224; it reads KFAVIQFPGS…SILNHAEVKA (223 aa). Residue Cys86 is the Nucleophile of the active site. Residues His195 and Glu197 contribute to the active site.

Part of the FGAM synthase complex composed of 1 PurL, 1 PurQ and 2 PurS subunits.

It localises to the cytoplasm. The catalysed reaction is N(2)-formyl-N(1)-(5-phospho-beta-D-ribosyl)glycinamide + L-glutamine + ATP + H2O = 2-formamido-N(1)-(5-O-phospho-beta-D-ribosyl)acetamidine + L-glutamate + ADP + phosphate + H(+). It carries out the reaction L-glutamine + H2O = L-glutamate + NH4(+). Its pathway is purine metabolism; IMP biosynthesis via de novo pathway; 5-amino-1-(5-phospho-D-ribosyl)imidazole from N(2)-formyl-N(1)-(5-phospho-D-ribosyl)glycinamide: step 1/2. Its function is as follows. Part of the phosphoribosylformylglycinamidine synthase complex involved in the purines biosynthetic pathway. Catalyzes the ATP-dependent conversion of formylglycinamide ribonucleotide (FGAR) and glutamine to yield formylglycinamidine ribonucleotide (FGAM) and glutamate. The FGAM synthase complex is composed of three subunits. PurQ produces an ammonia molecule by converting glutamine to glutamate. PurL transfers the ammonia molecule to FGAR to form FGAM in an ATP-dependent manner. PurS interacts with PurQ and PurL and is thought to assist in the transfer of the ammonia molecule from PurQ to PurL. The polypeptide is Phosphoribosylformylglycinamidine synthase subunit PurQ (Lactobacillus delbrueckii subsp. bulgaricus (strain ATCC 11842 / DSM 20081 / BCRC 10696 / JCM 1002 / NBRC 13953 / NCIMB 11778 / NCTC 12712 / WDCM 00102 / Lb 14)).